We begin with the raw amino-acid sequence, 408 residues long: Histidine--tRNA ligase (408 aa).

Belongs to the class-II aminoacyl-tRNA synthetase family. As to quaternary structure, homodimer.

It localises to the cytoplasm. The catalysed reaction is tRNA(His) + L-histidine + ATP = L-histidyl-tRNA(His) + AMP + diphosphate + H(+). The chain is Histidine--tRNA ligase from Campylobacter lari (strain RM2100 / D67 / ATCC BAA-1060).